Consider the following 883-residue polypeptide: Valine--tRNA ligase (883 aa).

The 'HIGH' region motif lies at Pro46–His56. Residues Lys520–Ser524 carry the 'KMSKS' region motif. Lys523 provides a ligand contact to ATP. A coiled-coil region spans residues Leu809 to Lys883.

This sequence belongs to the class-I aminoacyl-tRNA synthetase family. ValS type 1 subfamily. In terms of assembly, monomer.

It is found in the cytoplasm. The enzyme catalyses tRNA(Val) + L-valine + ATP = L-valyl-tRNA(Val) + AMP + diphosphate. Functionally, catalyzes the attachment of valine to tRNA(Val). As ValRS can inadvertently accommodate and process structurally similar amino acids such as threonine, to avoid such errors, it has a 'posttransfer' editing activity that hydrolyzes mischarged Thr-tRNA(Val) in a tRNA-dependent manner. The protein is Valine--tRNA ligase of Streptococcus mutans serotype c (strain ATCC 700610 / UA159).